The chain runs to 677 residues: UvrABC system protein B (677 aa).

In terms of domain architecture, Helicase ATP-binding spans Asp-31 to Arg-417. ATP is bound at residue Gly-44 to Ser-51. The Beta-hairpin motif lies at Tyr-97–Val-120. Residues Gln-434 to Val-596 enclose the Helicase C-terminal domain. The region spanning Lys-629–Lys-664 is the UVR domain.

It belongs to the UvrB family. As to quaternary structure, forms a heterotetramer with UvrA during the search for lesions. Interacts with UvrC in an incision complex.

Its subcellular location is the cytoplasm. Functionally, the UvrABC repair system catalyzes the recognition and processing of DNA lesions. A damage recognition complex composed of 2 UvrA and 2 UvrB subunits scans DNA for abnormalities. Upon binding of the UvrA(2)B(2) complex to a putative damaged site, the DNA wraps around one UvrB monomer. DNA wrap is dependent on ATP binding by UvrB and probably causes local melting of the DNA helix, facilitating insertion of UvrB beta-hairpin between the DNA strands. Then UvrB probes one DNA strand for the presence of a lesion. If a lesion is found the UvrA subunits dissociate and the UvrB-DNA preincision complex is formed. This complex is subsequently bound by UvrC and the second UvrB is released. If no lesion is found, the DNA wraps around the other UvrB subunit that will check the other stand for damage. This chain is UvrABC system protein B, found in Tropheryma whipplei (strain TW08/27) (Whipple's bacillus).